Reading from the N-terminus, the 193-residue chain is Interleukin-18 (193 aa).

Positions 1–36 (MAAEPVEDNCINFVAMKFIDNTLYFIAEDDENLESD) are excised as a propeptide.

It belongs to the IL-1 family. As to quaternary structure, forms a ternary complex with ligand-binding receptor subunit IL18R1 and signaling receptor subunit IL18RAP at the plasma membrane. Mature IL18 first binds to IL18R1 forming a low affinity binary complex, which then interacts with IL18RAP to form a high affinity ternary complex that signals inside the cell. Interacts with cargo receptor TMED10; the interaction mediates the translocation from the cytoplasm into the ERGIC (endoplasmic reticulum-Golgi intermediate compartment) and thereby secretion. In terms of processing, the pro-IL-18 precursor is processed by CASP1, CASP4 or CASP5 to yield its mature, active form. The pro-IL-18 precursor features autoinhibitory interactions between the propeptide and the post-cleavage-site region, preventing recognition by the IL18R1 receptor. Processing by CASP1, CASP4 or CASP5 induces conformational changes to generate critical receptor-binding sites. The mature form is then secreted and released in the extracellular milieu by passing through the gasdermin-D (GSDMD) pore. In contrast, cleavage by CASP3 inactivates IL18. As to expression, expressed in ovarian carcinoma but undetectable in normal ovarian epithelial cells. Resistant to proteolytic activation by caspase-1 and -4.

The protein localises to the cytoplasm. The protein resides in the cytosol. Its subcellular location is the secreted. In terms of biological role, pro-inflammatory cytokine primarily involved in epithelial barrier repair, polarized T-helper 1 (Th1) cell and natural killer (NK) cell immune responses. Upon binding to IL18R1 and IL18RAP, forms a signaling ternary complex which activates NF-kappa-B, triggering synthesis of inflammatory mediators. Synergizes with IL12/interleukin-12 to induce IFNG synthesis from T-helper 1 (Th1) cells and natural killer (NK) cells. Involved in transduction of inflammation downstream of pyroptosis: its mature form is specifically released in the extracellular milieu by passing through the gasdermin-D (GSDMD) pore. This is Interleukin-18 from Homo sapiens (Human).